Here is a 272-residue protein sequence, read N- to C-terminus: Ras-related protein RSR1 (272 aa).

Gly10 to Ser17 contacts GTP. An Effector region motif is present at residues Tyr32–Tyr40. Residues Asp57–Ile61 and Asn116–Asp119 each bind GTP. Positions Asp177 to Leu272 are disordered. Composition is skewed to polar residues over residues Asn180 to Val232 and Ser245 to Gln258. At Cys269 the chain carries Cysteine methyl ester. A lipid anchor (S-geranylgeranyl cysteine) is attached at Cys269. A propeptide spans Thr270–Leu272 (removed in mature form).

This sequence belongs to the small GTPase superfamily. Ras family.

Its subcellular location is the cell membrane. The enzyme catalyses GTP + H2O = GDP + phosphate + H(+). With respect to regulation, alternates between an inactive form bound to GDP and an active form bound to GTP. Activated by a guanine nucleotide-exchange factor (GEF) and inactivated by a GTPase-activating protein (GAP). Its function is as follows. Ras-related protein which binds GDP/GTP and possesses intrinsic GTPase activity. Involved in development of cell polarity during the cell division cycle, and essential for bud emergence. This Saccharomyces cerevisiae (strain ATCC 204508 / S288c) (Baker's yeast) protein is Ras-related protein RSR1.